The chain runs to 495 residues: Probable serine/threonine-protein kinase DDB_G0292354 (495 aa).

One can recognise a Protein kinase domain in the interval 16–275; sequence WTVVKKIGQG…PNYVFLQTLL (260 aa). ATP contacts are provided by residues 22–30 and lysine 45; that span reads IGQGAFGEI. Aspartate 136 acts as the Proton acceptor in catalysis. The segment at 293-469 is disordered; the sequence is EVQTNSGASS…NGNGSNSQPI (177 aa). 2 stretches are compositionally biased toward low complexity: residues 295–333 and 354–364; these read QTNSGASSSSSNTTQQQQQQQQQQQQRNLNQSGLNNSSA and NNSNNNNNNNN. Residues 385 to 395 show a composition bias toward polar residues; sequence ESNSQIANSSE. Residues 435–466 show a composition bias toward low complexity; the sequence is SNNNNINNNNNNYNNNNNNNNNSHMNGNGSNS.

This sequence belongs to the protein kinase superfamily. CK1 Ser/Thr protein kinase family.

This is Probable serine/threonine-protein kinase DDB_G0292354 from Dictyostelium discoideum (Social amoeba).